A 495-amino-acid chain; its full sequence is Methyl viologen resistance protein SmvA (495 aa).

The next 14 membrane-spanning stretches (helical) occupy residues 5–25 (WLTLVIIVLVYIPVAIDATVL), 44–64 (LWIIDIYSLVMAGMVLPMGAL), 73–93 (LLMLGGTLFGLASLAAAFSHT), 96–116 (WLIATRVLLAIGAAMIVPATL), 135–155 (VWAAVGSGGAAFGPLIGGILL), 158–178 (FYWGSVFLINVPIVLVVMGLT), 192–212 (PLNLGHAVMLIIAILLLVYSA), 220–240 (LSLWVISFTLLTGALLLGLFI), 260–280 (IILSGVVMAMTAMITLVGFEL), 299–319 (VFMLPVMVASGFSGPIAGVLV), 327–347 (VATGGMALSALSFYGLAMTDF), 357–377 (LMALLGFSAASALLASTSAIM), 391–411 (IETMAYELGAGLGIAIFGLLL), and 469–489 (VALSSAGSMLLLLAVGMWFSL).

Belongs to the major facilitator superfamily. TCR/Tet family.

It is found in the cell inner membrane. Functionally, major efflux pump for acriflavine and other quaternary ammonium compounds (QACs). Also required for resistance to methyl viologen. This chain is Methyl viologen resistance protein SmvA (smvA), found in Salmonella typhimurium (strain LT2 / SGSC1412 / ATCC 700720).